The sequence spans 296 residues: Ribosomal protein L11 methyltransferase (296 aa).

4 residues coordinate S-adenosyl-L-methionine: T151, G172, D194, and N233.

It belongs to the methyltransferase superfamily. PrmA family.

The protein localises to the cytoplasm. It carries out the reaction L-lysyl-[protein] + 3 S-adenosyl-L-methionine = N(6),N(6),N(6)-trimethyl-L-lysyl-[protein] + 3 S-adenosyl-L-homocysteine + 3 H(+). Functionally, methylates ribosomal protein L11. The protein is Ribosomal protein L11 methyltransferase of Dechloromonas aromatica (strain RCB).